The sequence spans 345 residues: Acetylserotonin O-methyltransferase (345 aa).

Residues Y147, W164, D210, 235–237, and R252 each bind S-adenosyl-L-methionine; that span reads GDF. The active-site Proton donor/acceptor is the H255. Substrate-binding residues include D256, N302, and Q306.

It belongs to the class I-like SAM-binding methyltransferase superfamily. Cation-independent O-methyltransferase family. In terms of assembly, homodimer. As to expression, expressed in the pineal gland (at protein level). Not detectable in retina, nor in liver.

It catalyses the reaction N-acetylserotonin + S-adenosyl-L-methionine = melatonin + S-adenosyl-L-homocysteine + H(+). It functions in the pathway aromatic compound metabolism; melatonin biosynthesis; melatonin from serotonin: step 1/2. Catalyzes the transfer of a methyl group onto N-acetylserotonin, producing melatonin (N-acetyl-5-methoxytryptamine). The sequence is that of Acetylserotonin O-methyltransferase (ASMT) from Bos taurus (Bovine).